Reading from the N-terminus, the 458-residue chain is ATP synthase subunit beta (458 aa).

An ATP-binding site is contributed by 148-155; that stretch reads GGAGVGKT.

Belongs to the ATPase alpha/beta chains family. In terms of assembly, F-type ATPases have 2 components, CF(1) - the catalytic core - and CF(0) - the membrane proton channel. CF(1) has five subunits: alpha(3), beta(3), gamma(1), delta(1), epsilon(1). CF(0) has three main subunits: a(1), b(2) and c(9-12). The alpha and beta chains form an alternating ring which encloses part of the gamma chain. CF(1) is attached to CF(0) by a central stalk formed by the gamma and epsilon chains, while a peripheral stalk is formed by the delta and b chains.

It is found in the cell inner membrane. The enzyme catalyses ATP + H2O + 4 H(+)(in) = ADP + phosphate + 5 H(+)(out). Functionally, produces ATP from ADP in the presence of a proton gradient across the membrane. The catalytic sites are hosted primarily by the beta subunits. This is ATP synthase subunit beta from Legionella pneumophila (strain Paris).